A 462-amino-acid chain; its full sequence is tRNA modification GTPase MnmE (462 aa).

(6S)-5-formyl-5,6,7,8-tetrahydrofolate-binding residues include Arg-23, Glu-88, and Arg-127. The TrmE-type G domain maps to 224–383; the sequence is GLATVIIGRP…LEKAIADLFF (160 aa). Asn-234 serves as a coordination point for K(+). GTP-binding positions include 234 to 239, 253 to 259, and 278 to 281; these read NVGKSS, TDIPGTT, and DTAG. A Mg(2+)-binding site is contributed by Ser-238. K(+)-binding residues include Thr-253, Ile-255, and Thr-258. Mg(2+) is bound at residue Thr-259. (6S)-5-formyl-5,6,7,8-tetrahydrofolate is bound at residue Lys-462.

Belongs to the TRAFAC class TrmE-Era-EngA-EngB-Septin-like GTPase superfamily. TrmE GTPase family. Homodimer. Heterotetramer of two MnmE and two MnmG subunits. K(+) serves as cofactor.

It is found in the cytoplasm. Exhibits a very high intrinsic GTPase hydrolysis rate. Involved in the addition of a carboxymethylaminomethyl (cmnm) group at the wobble position (U34) of certain tRNAs, forming tRNA-cmnm(5)s(2)U34. The protein is tRNA modification GTPase MnmE of Geobacillus kaustophilus (strain HTA426).